Here is a 286-residue protein sequence, read N- to C-terminus: Shikimate dehydrogenase (NADP(+)) (286 aa).

Shikimate contacts are provided by residues 22-24 (SLS) and Thr69. Lys73 functions as the Proton acceptor in the catalytic mechanism. Position 85 (Glu85) interacts with NADP(+). Positions 94 and 109 each coordinate shikimate. NADP(+) contacts are provided by residues 133–137 (GAGGA) and Val231. Tyr233 serves as a coordination point for shikimate. Gly254 is an NADP(+) binding site.

This sequence belongs to the shikimate dehydrogenase family. As to quaternary structure, homodimer.

The enzyme catalyses shikimate + NADP(+) = 3-dehydroshikimate + NADPH + H(+). It functions in the pathway metabolic intermediate biosynthesis; chorismate biosynthesis; chorismate from D-erythrose 4-phosphate and phosphoenolpyruvate: step 4/7. Its function is as follows. Involved in the biosynthesis of the chorismate, which leads to the biosynthesis of aromatic amino acids. Catalyzes the reversible NADPH linked reduction of 3-dehydroshikimate (DHSA) to yield shikimate (SA). The sequence is that of Shikimate dehydrogenase (NADP(+)) from Alkaliphilus metalliredigens (strain QYMF).